Consider the following 1303-residue polypeptide: D-lysergyl-peptide-synthetase subunit 2 (1303 aa).

The interval 256-653 is adenylation (A) domain; that stretch reads EWCRWTPSAV…CRKSTQVKLR (398 aa). The Carrier domain maps to 793–869; that stretch reads APSNDIEEAF…ELARHTKLVA (77 aa). Position 830 is an O-(pantetheine 4'-phosphoryl)serine (Ser830). The tract at residues 905–1294 is condensation (C) domain; the sequence is EDVYPCTPLQ…HAAPRTLIGD (390 aa).

This sequence belongs to the NRP synthetase family.

Its pathway is alkaloid biosynthesis; ergot alkaloid biosynthesis. In terms of biological role, D-lysergyl-peptide-synthetase subunit 2; part of the gene cluster that mediates the biosynthesis of fungal ergot alkaloid. DmaW catalyzes the first step of ergot alkaloid biosynthesis by condensing dimethylallyl diphosphate (DMAP) and tryptophan to form 4-dimethylallyl-L-tryptophan. The second step is catalyzed by the methyltransferase easF that methylates 4-dimethylallyl-L-tryptophan in the presence of S-adenosyl-L-methionine, resulting in the formation of 4-dimethylallyl-L-abrine. The catalase easC and the FAD-dependent oxidoreductase easE then transform 4-dimethylallyl-L-abrine to chanoclavine-I which is further oxidized by easD in the presence of NAD(+), resulting in the formation of chanoclavine-I aldehyde. Agroclavine dehydrogenase easG then mediates the conversion of chanoclavine-I aldehyde to agroclavine via a non-enzymatic adduct reaction: the substrate is an iminium intermediate that is formed spontaneously from chanoclavine-I aldehyde in the presence of glutathione. The presence of easA is not required to complete this reaction. Further conversion of agroclavine to paspalic acid is a two-step process involving oxidation of agroclavine to elymoclavine and of elymoclavine to paspalic acid, the second step being performed by the elymoclavine oxidase cloA. Paspalic acid is then further converted to D-lysergic acid. Ergopeptines are assembled from D-lysergic acid and three different amino acids by the D-lysergyl-peptide-synthetases composed each of a monomudular and a trimodular nonribosomal peptide synthetase subunit. LpsB and lpsC encode the monomodular subunits responsible for D-lysergic acid activation and incorporation into the ergopeptine backbone. LpsA1 and A2 subunits encode the trimodular nonribosomal peptide synthetase assembling the tripeptide portion of ergopeptines. LpsA1 is responsible for formation of the major ergopeptine, ergotamine, and lpsA2 for alpha-ergocryptine, the minor ergopeptine of the total alkaloid mixture elaborated by C.purpurea. D-lysergyl-tripeptides are assembled by the nonribosomal peptide synthetases and released as N-(D-lysergyl-aminoacyl)-lactams. Cyclolization of the D-lysergyl-tripeptides is performed by the Fe(2+)/2-ketoglutarate-dependent dioxygenase easH which introduces a hydroxyl group into N-(D-lysergyl-aminoacyl)-lactam at alpha-C of the aminoacyl residue followed by spontaneous condensation with the terminal lactam carbonyl group. The polypeptide is D-lysergyl-peptide-synthetase subunit 2 (Claviceps purpurea (strain 20.1) (Ergot fungus)).